The sequence spans 329 residues: MAAMVDAKPAASVQGTPLLATATLPVFTRGIYSTKRITLETSSPSSPPPPKPLIIVTPAGKGTFNVILFLHGTSLSNKSYSKIFDHIASHGFIVVAPQLYTSIPPPSATNELNSAAEVAEWLPQGLQQNLPENTEANVSLVAVMGHSRGGQTAFALSLRYGFGAVIGLDPVAGTSKTTGLDPSILSFDSFDFSIPVTVIGTGLGGVARCITACAPEGANHEEFFNRCKNSSRAHFVATDYGHMDILDDNPSDVKSWALSKYFCKNGNESRDPMRRCVSGIVVAFLKDFFYGDAEDFRQILKDPSFAPIKLDSVEYIDASSMLTTTHVKV.

Residues 1–21 constitute a chloroplast transit peptide; that stretch reads MAAMVDAKPAASVQGTPLLAT. The short motif at 145–149 is the GXSXG element; it reads GHSRG. S147 (nucleophile) is an active-site residue. Residues D169 and H242 each act as charge relay system in the active site.

This sequence belongs to the AB hydrolase superfamily. Lipase family.

Its subcellular location is the plastid. The protein resides in the chloroplast. The catalysed reaction is a chlorophyll + H2O = a chlorophyllide + phytol + H(+). Its pathway is porphyrin-containing compound metabolism; chlorophyll degradation. Its function is as follows. Catalyzes the hydrolysis of ester bond in chlorophyll to yield chlorophyllide and phytol. In Citrus sinensis (Sweet orange), this protein is Chlorophyllase-1, chloroplastic (CHLASE1).